A 208-amino-acid polypeptide reads, in one-letter code: Uracil phosphoribosyltransferase (208 aa).

5-phospho-alpha-D-ribose 1-diphosphate-binding positions include R78, R103, and 130-138 (DPMLATGGS). Uracil-binding positions include I193 and 198–200 (GDA). D199 lines the 5-phospho-alpha-D-ribose 1-diphosphate pocket.

It belongs to the UPRTase family. Requires Mg(2+) as cofactor.

It carries out the reaction UMP + diphosphate = 5-phospho-alpha-D-ribose 1-diphosphate + uracil. Its pathway is pyrimidine metabolism; UMP biosynthesis via salvage pathway; UMP from uracil: step 1/1. Allosterically activated by GTP. Its function is as follows. Catalyzes the conversion of uracil and 5-phospho-alpha-D-ribose 1-diphosphate (PRPP) to UMP and diphosphate. This chain is Uracil phosphoribosyltransferase, found in Histophilus somni (strain 129Pt) (Haemophilus somnus).